The chain runs to 50 residues: Sperm protamine P1 (50 aa).

Intrachain disulfides connect cysteine 7/cysteine 15 and cysteine 38/cysteine 46.

This sequence belongs to the protamine P1 family. In terms of assembly, cross-linked by interchain disulfide bonds around the DNA-helix. As to expression, testis.

It localises to the nucleus. It is found in the chromosome. In terms of biological role, protamines substitute for histones in the chromatin of sperm during the haploid phase of spermatogenesis. They compact sperm DNA into a highly condensed, stable and inactive complex. This is Sperm protamine P1 (PRM1) from Equus caballus (Horse).